The sequence spans 422 residues: Serine--tRNA ligase (422 aa).

Residue 229-231 (TAE) participates in L-serine binding. An ATP-binding site is contributed by 260–262 (RKE). Residue E283 coordinates L-serine. Position 347 to 350 (347 to 350 (EISS)) interacts with ATP. S383 contacts L-serine.

This sequence belongs to the class-II aminoacyl-tRNA synthetase family. Type-1 seryl-tRNA synthetase subfamily. In terms of assembly, homodimer. The tRNA molecule binds across the dimer.

Its subcellular location is the cytoplasm. It carries out the reaction tRNA(Ser) + L-serine + ATP = L-seryl-tRNA(Ser) + AMP + diphosphate + H(+). The enzyme catalyses tRNA(Sec) + L-serine + ATP = L-seryl-tRNA(Sec) + AMP + diphosphate + H(+). The protein operates within aminoacyl-tRNA biosynthesis; selenocysteinyl-tRNA(Sec) biosynthesis; L-seryl-tRNA(Sec) from L-serine and tRNA(Sec): step 1/1. Catalyzes the attachment of serine to tRNA(Ser). Is also able to aminoacylate tRNA(Sec) with serine, to form the misacylated tRNA L-seryl-tRNA(Sec), which will be further converted into selenocysteinyl-tRNA(Sec). This chain is Serine--tRNA ligase, found in Geobacter sulfurreducens (strain ATCC 51573 / DSM 12127 / PCA).